A 427-amino-acid chain; its full sequence is Protein TIFY 6a (427 aa).

Residues 1-25 (MERDFLGAIWRKEEAAGKPEEHSDY) show a composition bias toward basic and acidic residues. 2 disordered regions span residues 1–32 (MERD…GGGA) and 128–154 (YGVA…HANP). Residues 136–146 (FPSPSPSPRHP) show a composition bias toward pro residues. The region spanning 196 to 231 (QNPKVTQMTIFYDGLVNVFDNIPVEKAQELMLLASR) is the Tify domain. A disordered region spans residues 296–327 (SFSSSNDSAGPKSGGLPLAVTPLSQASPSQPI). Residues 317 to 327 (PLSQASPSQPI) show a composition bias toward polar residues. The Jas motif lies at 343 to 367 (PQARKASLARFLEKRKERVSSVAPY). Residues 345-352 (ARKASLAR) carry the Nuclear localization signal motif. The segment at 361–427 (VSSVAPYPSS…QEPPSTKLQI (67 aa)) is disordered. Composition is skewed to polar residues over residues 369-402 (SSKS…NNCE) and 411-427 (RNIS…KLQI).

This sequence belongs to the TIFY/JAZ family. Interacts with COI1A. Interacts with COI1A and COI1B in a coronatine-dependent manner. Coronatine is an analog of jasmonoyl isoleucine (JA-Ile). Ubiquitinated. Targeted for degradation by the SCF(COI1) E3 ubiquitin ligase-proteasome pathway during jasmonate signaling.

It localises to the nucleus. Repressor of jasmonate responses. This chain is Protein TIFY 6a, found in Oryza sativa subsp. japonica (Rice).